The primary structure comprises 255 residues: uncharacterized protein (255 aa).

It belongs to the methyltransferase superfamily.

This is an uncharacterized protein from Mycolicibacterium gilvum (strain PYR-GCK) (Mycobacterium gilvum (strain PYR-GCK)).